Here is a 766-residue protein sequence, read N- to C-terminus: Serine/threonine-protein kinase tousled-like 1 (766 aa).

The disordered stretch occupies residues 1-198 (MSVQSSSGSL…PSPTALAFGD (198 aa)). The span at 20 to 33 (STSPTPGSAAAARS) shows a compositional bias: low complexity. Phosphothreonine is present on T38. The segment covering 43-64 (RPREGAMDELHSLDPRRQELLE) has biased composition (basic and acidic residues). Residues S54, S77, and S80 each carry the phosphoserine modification. A compositionally biased stretch (low complexity) spans 68–85 (TGVATGSTGSTGSCSVGA). Positions 87–103 (ASTNNESSNHSFGSLGS) are enriched in polar residues. A compositionally biased stretch (basic and acidic residues) spans 105 to 121 (SDKESETPEKKQSESSR). Phosphoserine is present on residues S134, S159, S174, and S176. Positions 170–192 (SPQNSHSHSTPSSSVRPNSPSPT) are enriched in low complexity. Residues 229–280 (NQDLEKKEGRIDDLLRANCDLRRQIDDQQKLLEKYKERLNKCISMSKKLLIE) adopt a coiled-coil conformation. Residues 344–381 (KLLGKRKPPTANNSQAPATNSEAKQRKTKAVNGAENDP) form a disordered region. The segment covering 353 to 365 (TANNSQAPATNSE) has biased composition (polar residues). A coiled-coil region spans residues 397–445 (HEQEEIFKLRLGHLKKEEAEIQAELERLERVRNLHIRELKRINNEDNSQ). Positions 456 to 734 (YLLLHLLGRG…VHQLANDPYL (279 aa)) constitute a Protein kinase domain. ATP contacts are provided by residues 462 to 470 (LGRGGFSEV) and K485. The active-site Proton acceptor is the D586. The residue at position 743 (S743) is a Phosphoserine. The disordered stretch occupies residues 745–766 (GNLHMSGLTATPTPPSSSIITY).

Belongs to the protein kinase superfamily. Ser/Thr protein kinase family. As to quaternary structure, heterodimer with TLK2. Mg(2+) serves as cofactor. As to expression, ubiquitously expressed in all tissues examined.

The protein localises to the nucleus. The catalysed reaction is L-seryl-[protein] + ATP = O-phospho-L-seryl-[protein] + ADP + H(+). It catalyses the reaction L-threonyl-[protein] + ATP = O-phospho-L-threonyl-[protein] + ADP + H(+). Its activity is regulated as follows. Cell-cycle regulated, maximal activity in S-phase. Inactivated by phosphorylation at Ser-743, potentially by CHEK1. Functionally, rapidly and transiently inhibited by phosphorylation following the generation of DNA double-stranded breaks during S-phase. This is cell cycle checkpoint and ATM-pathway dependent and appears to regulate processes involved in chromatin assembly. Isoform 3 protects the cells from the ionizing radiation by facilitating the repair of DSBs. In vitro, phosphorylates histone H3 at 'Ser-10'. The sequence is that of Serine/threonine-protein kinase tousled-like 1 (Tlk1) from Mus musculus (Mouse).